A 127-amino-acid polypeptide reads, in one-letter code: Small ribosomal subunit protein uS11 (127 aa).

This sequence belongs to the universal ribosomal protein uS11 family. As to quaternary structure, part of the 30S ribosomal subunit. Interacts with proteins S7 and S18. Binds to IF-3.

Its function is as follows. Located on the platform of the 30S subunit, it bridges several disparate RNA helices of the 16S rRNA. Forms part of the Shine-Dalgarno cleft in the 70S ribosome. The protein is Small ribosomal subunit protein uS11 of Chlorobium limicola (strain DSM 245 / NBRC 103803 / 6330).